A 218-amino-acid polypeptide reads, in one-letter code: Octanoyltransferase (218 aa).

Residues 32-218 (GDAPEAVWLL…LRTFSRSFPD (187 aa)) form the BPL/LPL catalytic domain. Substrate-binding positions include 71–78 (RGGQYTYH), 151–153 (AIG), and 164–166 (GLS). Cysteine 182 acts as the Acyl-thioester intermediate in catalysis.

Belongs to the LipB family.

It localises to the cytoplasm. It catalyses the reaction octanoyl-[ACP] + L-lysyl-[protein] = N(6)-octanoyl-L-lysyl-[protein] + holo-[ACP] + H(+). The protein operates within protein modification; protein lipoylation via endogenous pathway; protein N(6)-(lipoyl)lysine from octanoyl-[acyl-carrier-protein]: step 1/2. Functionally, catalyzes the transfer of endogenously produced octanoic acid from octanoyl-acyl-carrier-protein onto the lipoyl domains of lipoate-dependent enzymes. Lipoyl-ACP can also act as a substrate although octanoyl-ACP is likely to be the physiological substrate. The polypeptide is Octanoyltransferase (Cereibacter sphaeroides (strain ATCC 17025 / ATH 2.4.3) (Rhodobacter sphaeroides)).